Here is a 1252-residue protein sequence, read N- to C-terminus: Myosin-1 (1252 aa).

A disordered region spans residues 1–27 (MAPSKKAGKKVTPASKKSAGQGKVAKA). The Myosin motor domain occupies 38 to 712 (VGVSDMTLLT…TLFALETMRD (675 aa)). Residue 128–135 (GESGAGKT) coordinates ATP. S356 carries the phosphoserine modification. The tract at residues 403–485 (IIGILDIFGF…PGIFAALNDA (83 aa)) is actin-binding. IQ domains are found at residues 716-736 (HNMA…KHEC) and 737-762 (ARRI…YGHQ). The region spanning 770-953 (RRRFSLLSYR…TVHVASGEPP (184 aa)) is the TH1 domain. Disordered regions lie at residues 945–1049 (VHVA…PETP) and 1103–1228 (PPKA…PATA). 2 stretches are compositionally biased toward pro residues: residues 989-999 (RSVPKPKPVAQ) and 1028-1046 (RPPP…PAKP). The SH3 domain occupies 1046–1104 (PETPMYRAKFAFEGQEGEMSLKKDDVVELVEKDDNGWWLVKMDGVEGWAPNNYLELVPP). Residues 1162–1175 (ADTTPASSRPSSAI) show a composition bias toward polar residues. Residues 1178-1193 (KPPPPVAAKPKPPVIP) are compositionally biased toward pro residues. The span at 1194–1203 (VKPSVSAKGP) shows a compositional bias: low complexity. Pro residues predominate over residues 1204–1215 (AKPPIPTAPRPP). The span at 1216 to 1228 (AASTSRSSKPATA) shows a compositional bias: low complexity.

Belongs to the TRAFAC class myosin-kinesin ATPase superfamily. Myosin family. In terms of processing, phosphorylation of the TEDS site (Ser-356) is required for the polarization of the actin cytoskeleton. Phosphorylation probably activates the myosin-I ATPase activity.

The protein localises to the cytoplasm. It localises to the cytoskeleton. Its subcellular location is the actin patch. Its function is as follows. Type-I myosin implicated in the organization of the actin cytoskeleton. Required for proper actin cytoskeleton polarization. At the cell cortex, assembles in patch-like structures together with proteins from the actin-polymerizing machinery and promotes actin assembly. Functions as actin nucleation-promoting factor (NPF) for the Arp2/3 complex. This chain is Myosin-1 (MYO1), found in Laccaria bicolor (strain S238N-H82 / ATCC MYA-4686) (Bicoloured deceiver).